We begin with the raw amino-acid sequence, 103 residues long: Cell division protein FtsB (103 aa).

At 1–3 (MGK) the chain is on the cytoplasmic side. Residues 4-21 (LTLLLLAILVWLQYSLWF) form a helical membrane-spanning segment. Over 22–103 (GKNGIHDYTR…RAQSAGQNNR (82 aa)) the chain is Periplasmic. A coiled-coil region spans residues 31-71 (RVNDDVAAQQATNAKLKARNDQLFAEIDDLNGGQEALEERA).

Belongs to the FtsB family. As to quaternary structure, part of a complex composed of FtsB, FtsL and FtsQ.

The protein localises to the cell inner membrane. Its function is as follows. Essential cell division protein. May link together the upstream cell division proteins, which are predominantly cytoplasmic, with the downstream cell division proteins, which are predominantly periplasmic. This Escherichia coli O157:H7 protein is Cell division protein FtsB.